A 529-amino-acid polypeptide reads, in one-letter code: Glucose-6-phosphate isomerase (529 aa).

E323 acts as the Proton donor in catalysis. Catalysis depends on residues H352 and K456.

This sequence belongs to the GPI family.

It is found in the cytoplasm. The catalysed reaction is alpha-D-glucose 6-phosphate = beta-D-fructose 6-phosphate. It participates in carbohydrate biosynthesis; gluconeogenesis. The protein operates within carbohydrate degradation; glycolysis; D-glyceraldehyde 3-phosphate and glycerone phosphate from D-glucose: step 2/4. Its function is as follows. Catalyzes the reversible isomerization of glucose-6-phosphate to fructose-6-phosphate. The protein is Glucose-6-phosphate isomerase of Geobacter sulfurreducens (strain ATCC 51573 / DSM 12127 / PCA).